Here is a 383-residue protein sequence, read N- to C-terminus: Putative glutamate--cysteine ligase 2-2 (383 aa).

Belongs to the glutamate--cysteine ligase type 2 family. YbdK subfamily.

The catalysed reaction is L-cysteine + L-glutamate + ATP = gamma-L-glutamyl-L-cysteine + ADP + phosphate + H(+). Functionally, ATP-dependent carboxylate-amine ligase which exhibits weak glutamate--cysteine ligase activity. In Legionella pneumophila (strain Lens), this protein is Putative glutamate--cysteine ligase 2-2.